Consider the following 709-residue polypeptide: MAADESSADTLRLQFKAMQELQHRRLQKQMEKKREKELSCQSKADNQEGFMVIPDGLSLLDTEEQNLKNIFEKRVLEDEIQHLRSELRETVDENGRLYKLLKERDFEIKHLKKKIEEDRFAFTGASGMAGDLVATKIVELSKKNRGLMAESESAKVRIKQLTNRIQELEHQLQMASAKPPSKGATDAGAKPLKTQTGDRALLETPEVKALQDRLAATNLKMSDLRNQIQSAKQELRVAQKVLANEVGEDVNIQQLLASPGTWRGRAQQILVLQSRVRDLEKQLGQRQNKPAGSSSSEVPLSSDSRKMTAQEKNLLRIRSLERDKQESWEKLASERDTLQTELEELRKKFEGMRSRNKVLSSEVKTLRSQMTTLVEKGRHDDELIDALMDQLKQLQDILSSLSVQEESRRTSQQHLDQKVNSEAQRSSSLVAQLRAMVADREAKVRQLELEIGQLSVQYLHGKGGGEGASPADARFPEDQTPITNSPASAGDHVGRLGSSRSVTSLGHTLVESALTRPSLPSPHGTSPRFSDSPEQKGWQAQAAEMKALWQAAEVERDRLNEFVTVLQKRVEESSSKLLEAERRLQEERQRAVLLEQHLEKMRLEPSRASVSQKTKNKPGPPAANTKPNSAGSAKKDSSSTQLCDMPMESQIQELNARLAIQMEENGILRDALGSALRGKEEDFRMYHQTLGQVKGVFLQALRQQKANKQ.

Coiled-coil stretches lie at residues 70 to 97, 139 to 178, and 206 to 288; these read IFEK…NGRL, ELSK…ASAK, and EVKA…QRQN. The residue at position 258 (S258) is a Phosphoserine. The tract at residues 281-312 is disordered; sequence KQLGQRQNKPAGSSSSEVPLSSDSRKMTAQEK. Over residues 293–302 the composition is skewed to low complexity; it reads SSSSEVPLSS. Positions 323–457 form a coiled coil; sequence DKQESWEKLA…ELEIGQLSVQ (135 aa). Disordered regions lie at residues 462–499, 512–542, and 600–641; these read KGGG…LGSS, SALT…QAQA, and KMRL…SSTQ. S469 and S532 each carry phosphoserine. A coiled-coil region spans residues 539–604; that stretch reads QAQAAEMKAL…EQHLEKMRLE (66 aa).

As to quaternary structure, interacts with PCM1, CEP290 and PCNT.

It localises to the cytoplasm. It is found in the cytoskeleton. The protein localises to the microtubule organizing center. The protein resides in the centrosome. Its subcellular location is the centriolar satellite. It localises to the cilium basal body. Its function is as follows. Required for primary cilia formation and promotes the localization of the ciliopathy protein BBS4 to both centriolar satellites and cilia. The sequence is that of Coiled-coil domain-containing protein 13 from Mus musculus (Mouse).